We begin with the raw amino-acid sequence, 421 residues long: Testin (421 aa).

In terms of domain architecture, PET spans Met92–Asn199. Disordered stretches follow at residues Glu133–Cys164 and Lys193–Arg213. Residues Pro155–Cys164 are compositionally biased toward basic and acidic residues. LIM zinc-binding domains follow at residues Tyr234–Glu297, Pro299–Val359, and Gln362–Ser421.

Belongs to the prickle / espinas / testin family. Interacts via LIM domain 1 with ZYX. Interacts (via LIM domain 3) with ENAH and VASP. Interacts with ALKBH4, talin, actin, alpha-actinin, GRIP1 and PXN. Interacts (via LIM domain 2) with ACTL7A (via N-terminus). Heterodimer with ACTL7A; the heterodimer interacts with ENAH to form a heterotrimer.

It localises to the cytoplasm. It is found in the cell junction. The protein localises to the focal adhesion. Scaffold protein that may play a role in cell adhesion, cell spreading and in the reorganization of the actin cytoskeleton. Plays a role in the regulation of cell proliferation. May act as a tumor suppressor. The polypeptide is Testin (TES) (Ovis aries (Sheep)).